A 363-amino-acid polypeptide reads, in one-letter code: Alanine racemase (363 aa).

Lysine 34 acts as the Proton acceptor; specific for D-alanine in catalysis. Position 34 is an N6-(pyridoxal phosphate)lysine (lysine 34). Arginine 129 contacts substrate. Catalysis depends on tyrosine 256, which acts as the Proton acceptor; specific for L-alanine. Substrate is bound at residue methionine 304.

The protein belongs to the alanine racemase family. Pyridoxal 5'-phosphate is required as a cofactor.

It catalyses the reaction L-alanine = D-alanine. It functions in the pathway amino-acid biosynthesis; D-alanine biosynthesis; D-alanine from L-alanine: step 1/1. Its function is as follows. Catalyzes the interconversion of L-alanine and D-alanine. May also act on other amino acids. This Edwardsiella ictaluri (strain 93-146) protein is Alanine racemase (alr).